Consider the following 138-residue polypeptide: Small ribosomal subunit protein uS11c (138 aa).

It belongs to the universal ribosomal protein uS11 family. In terms of assembly, part of the 30S ribosomal subunit.

The protein localises to the plastid. The protein resides in the chloroplast. This is Small ribosomal subunit protein uS11c from Phaseolus vulgaris (Kidney bean).